The following is a 133-amino-acid chain: Small ribosomal subunit protein uS19 (133 aa).

Belongs to the universal ribosomal protein uS19 family.

Its function is as follows. Protein S19 forms a complex with S13 that binds strongly to the 16S ribosomal RNA. This Archaeoglobus fulgidus (strain ATCC 49558 / DSM 4304 / JCM 9628 / NBRC 100126 / VC-16) protein is Small ribosomal subunit protein uS19 (rps19).